We begin with the raw amino-acid sequence, 510 residues long: Chorion transcription factor Cf2 (510 aa).

Polar residues predominate over residues 1–10 (MIKSTTNPQE). A disordered region spans residues 1–40 (MIKSTTNPQEQRLPRPEDQSPAPPPPPPSSATTSTAAPAT). Over residues 30–40 (SATTSTAAPAT) the composition is skewed to low complexity. C2H2-type zinc fingers lie at residues 74 to 97 (HYCP…QLCH) and 125 to 148 (HPCF…RLAH). Basic and acidic residues predominate over residues 222 to 237 (PEEQHHQQQLQAEHHH). Residues 222-279 (PEEQHHQQQLQAEHHHQQQHQQQQQQQQQQQELLEQQQREMQEQAQQQQVHHHQQDQD) are disordered. Residues 240–257 (QHQQQQQQQQQQQELLEQ) show a composition bias toward low complexity. 5 consecutive C2H2-type zinc fingers follow at residues 366–388 (HKCP…RKIH), 401–423 (YTCS…TRIH), 429–451 (FRCG…LTTH), 457–479 (FHCG…IRTH), and 485–508 (YTCP…TKLH).

As to expression, isoform I is found in embryos, pupae and adult somatic tissue; isoform II occurs in embryos, pupae, ovaries, testis and to a lesser extent in adult somatic tissue.

Its subcellular location is the nucleus. Functionally, transcriptional regulator; binds to the promoter region of Cp15. Also binds to its own promoter, thus having a probable autoregulatory role. This is Chorion transcription factor Cf2 (Cf2) from Drosophila melanogaster (Fruit fly).